The sequence spans 350 residues: Casein kinase II subunit alpha' (350 aa).

One can recognise a Protein kinase domain in the interval 40–325 (YQLVRKLGRG…AKEAMEHPYF (286 aa)). Residues 46–54 (LGRGKYSEV) and Lys69 each bind ATP. The Proton acceptor role is filled by Asp157.

This sequence belongs to the protein kinase superfamily. Ser/Thr protein kinase family. CK2 subfamily. In terms of assembly, tetramer composed of an alpha chain, an alpha' and two beta chains.

It catalyses the reaction L-seryl-[protein] + ATP = O-phospho-L-seryl-[protein] + ADP + H(+). The enzyme catalyses L-threonyl-[protein] + ATP = O-phospho-L-threonyl-[protein] + ADP + H(+). Casein kinases are operationally defined by their preferential utilization of acidic proteins such as caseins as substrates. The alpha and alpha' chains contain the catalytic site. Participates in Wnt signaling. The sequence is that of Casein kinase II subunit alpha' from Gallus gallus (Chicken).